A 144-amino-acid polypeptide reads, in one-letter code: MKNNSAQKIIDSIKQILSIYKIDFEPSFGATLTDDNDLDYQMLIEKTQEKIQELDKRSQEILQQTGMTREQMEVFANNPDNFSPEEWRALENIRSSCNEYKKETEELIKEVTNDIGHSSHKSPTPKKTKSSSQKKSKKKNWIPL.

The interval Glu-110 to Leu-144 is disordered. Residues Ser-118–Leu-144 are compositionally biased toward basic residues.

It belongs to the chlamydial CPn_0742/CT_635/TC_0003 family.

The protein is Protein CT_635 of Chlamydia trachomatis serovar D (strain ATCC VR-885 / DSM 19411 / UW-3/Cx).